A 478-amino-acid chain; its full sequence is Major facilitator superfamily domain-containing protein 12 (478 aa).

At M1 the chain carries N-acetylmethionine. Residues 1 to 26 (MVPGSPAAGAGPAPRALSLAARLSYA) are Cytoplasmic-facing. A helical transmembrane segment spans residues 27–47 (VGHFLNDLCASMWFTYLLLYL). Residues 48–56 (HSVRAYSSR) are Lumenal-facing. The helical transmembrane segment at 57-77 (GAGLLLLLGQVADGLCTPLVG) threads the bilayer. Residues 78-97 (YEADRAAGRCARCGPRKAWH) are Cytoplasmic-facing. A helical membrane pass occupies residues 98-118 (LVGTVCVLLSFPFIFSPCLGC). Residues 119-124 (GAATPE) lie on the Lumenal side of the membrane. Residues 125 to 145 (WAALLYYGPFIVVFQFGWAAT) traverse the membrane as a helical segment. The Cytoplasmic segment spans residues 146–168 (QIAHLSLIPELVTSDHEKVELTA). Residues 169–189 (LRYAFTVVANITVFGAAWLLL) traverse the membrane as a helical segment. Over 190 to 216 (RLQGSAREGPPDEAGDHLGVQDVPVFR) the chain is Lumenal. Residues 217–237 (TLSLCVVGVGAVFSLLFHLGT) traverse the membrane as a helical segment. The Cytoplasmic segment spans residues 238–277 (RERRRPPAQEPDERSPLLAPATARPLLLWKHWLREPSFYQ). Residues 278 to 300 (VGLLYMSTRLIVNLSQTYIAMYL) traverse the membrane as a helical segment. Over 301 to 308 (TYSLNLPK) the chain is Lumenal. Residues 309 to 329 (KFIATIPLVMYVSGFCSSFLM) form a helical membrane-spanning segment. The Cytoplasmic segment spans residues 330–338 (KPVNKCIGR). A helical membrane pass occupies residues 339 to 359 (NMTYFVGLLVILAFAAWVVLV). At 360–361 (DE) the chain is on the lumenal side. A helical membrane pass occupies residues 362 to 382 (LGMAVYVAAVLLGGGCATILV). Residues 383-400 (TSLAMTADLIGPHTHSGA) lie on the Cytoplasmic side of the membrane. The helical transmembrane segment at 401-421 (FVYGAMSFSDKVANGLAVMVI) threads the bilayer. The Lumenal portion of the chain corresponds to 422 to 436 (QSLHPCSLELCCRAC). Residues 437 to 457 (VGFYHWVMVAVTGGVGVAATL) traverse the membrane as a helical segment. Over 458 to 478 (SLCSLLVWPIRLRSWDPGAQP) the chain is Cytoplasmic.

This sequence belongs to the major facilitator superfamily.

The protein localises to the melanosome membrane. The protein resides in the lysosome membrane. The catalysed reaction is L-cysteine(in) = L-cysteine(out). Transporter that mediates the import of cysteine into melanosomes, thereby regulating skin/hair pigmentation. In melanosomes, cysteine import is required both for normal levels of cystine, the oxidized dimer of cysteine, and provide cysteine for the production of the cysteinyldopas used in pheomelanin synthesis, thereby regulating skin/hair pigmentation. Also catalyzes import of cysteine into lysosomes in non-pigmented cells, regulating lysosomal cystine and cysteine storage, which is essnetial for redox homeostasis. The polypeptide is Major facilitator superfamily domain-containing protein 12 (Equus caballus (Horse)).